The following is a 435-amino-acid chain: IAA-amino acid hydrolase ILR1-like 5 (435 aa).

An N-terminal signal peptide occupies residues 1-25 (MSFCKLVSFVLILHLLNSCLISCSS). Residues C134, H136, E170, H194, and H397 each coordinate Mn(2+). Positions 432-435 (KDEL) match the Prevents secretion from ER motif.

The protein belongs to the peptidase M20 family.

The protein resides in the endoplasmic reticulum lumen. Hydrolyzes certain amino acid conjugates of the plant growth regulator indole-3-acetic acid (IAA). The sequence is that of IAA-amino acid hydrolase ILR1-like 5 from Arabidopsis thaliana (Mouse-ear cress).